The following is a 123-amino-acid chain: UPF0102 protein MCA0184 (123 aa).

It belongs to the UPF0102 family.

The polypeptide is UPF0102 protein MCA0184 (Methylococcus capsulatus (strain ATCC 33009 / NCIMB 11132 / Bath)).